The sequence spans 268 residues: Microtubule-associated protein RP/EB family member 1 (268 aa).

Residue Ala-2 is modified to N-acetylalanine. One can recognise a Calponin-homology (CH) domain in the interval 14 to 116 (NLSRHDMLAW…FVQWFKKFFD (103 aa)). Lys-66 carries the post-translational modification N6-crotonyllysine. Residue Tyr-124 is modified to Phosphotyrosine. An interaction with MTUS2/TIP150 region spans residues 124 to 268 (YDPVAARQGQ…GGPQEEQEEY (145 aa)). Positions 146–191 (LSKPKKPLGSGSAAPQRPIATQRTTAAPKAGPGMVRKNPGMGNGDD) are disordered. Ser-155 is modified (phosphoserine). One can recognise an EB1 C-terminal domain in the interval 185–255 (GMGNGDDEAA…LYATDEGFVI (71 aa)). The interval 206–211 (TVEDLE) is interaction with APC. A DCTN1-binding region spans residues 208–268 (EDLEKERDFY…GGPQEEQEEY (61 aa)). Lys-220 carries the post-translational modification N6-acetyllysine. The interval 220-242 (KLRNIELICQENEGENDPVLQRI) is APC-binding. An interaction with SKA1 region spans residues 232-255 (EGENDPVLQRIVDILYATDEGFVI).

The protein belongs to the MAPRE family. In terms of assembly, homodimer. Heterodimer with MAPRE3. Interacts with DCTN1, DCTN2, TERF1 and dynein intermediate chain. Interaction with DIAPH1 and DIAPH2. Interacts (via C-terminal residues 206-211) with APC (via C-terminal residues 2674-2845); the interaction inhibits association with and bundling of F-actin. Interacts with CLASP2, DST, KIF2C and STIM1; probably required for their targeting to the growing microtubule plus ends. Interacts with MTUS2; interaction is direct and probably targets MTUS2 to microtubules. Interacts (via C-terminus) with SKA1 (via SXIP motif); the interaction is direct and stabilizes the kinetochore-microtubule attachment of the SKA1 complex. Interacts with APC2. Interacts with CLASP1. Interacts with CDK5RAP2. According to another report, MAPRE1 does not interact with CDK5RAP2. Interacts with MACF1. Interacts with RABL2/RABL2A; binds preferentially to GTP-bound RABL2. Interacts with KCNAB2. Interacts (via C-terminus) with CLIP1. Interacts with SLAIN2 and SLAIN1. Interacts with KIF18B; this interaction is required for efficient accumulation of KIF18B at microtubule plus ends. Interacts with MISP. Interacts with KNSTRN. Interacts with NCKAP5L. Interacts with AKAP9. Interacts with PDE4DIP; this interaction, which is PDE4DIP isoform-specific, is required for its recruitment to the Golgi apparatus. Interacts with CAMSAP2. May form a pericentrosomal complex with AKAP9, CDK5RAP2 and PDE4DIP isoform 2/MMG8/SMYLE; within this complex, MAPRE1 binding to CDK5RAP2 may be mediated by PDE4DIP. Contrary to other mammalian species, does not interact with CDK5RAP2, possibly due to the lack of conservation of the MAPRE1-binding motif in rat CDK5RAP2. Interacts with AKNA. Interacts with GAS2L1, GAS2L2, and GAS2L3. Interacts with RARRES1 and AGBL2. Post-translationally, acetylation at Lys-220 by KAT2B/PCAF promotes dynamic kinetochore-microtubule interactions in early mitosis. Crotonylated by KAT5 during mitosis, promoting astral microtubule plasticity and dynamic connection between astral microtubules and the cortex during mitotic chromosome segregation, thereby ensuring accurate spindle positioning in mitosis. Decrotonylated by HDAC3.

It is found in the cytoplasm. The protein localises to the cytoskeleton. Its subcellular location is the microtubule organizing center. The protein resides in the centrosome. It localises to the golgi apparatus. It is found in the spindle. The protein localises to the spindle pole. Plus-end tracking protein (+TIP) that binds to the plus-end of microtubules and regulates the dynamics of the microtubule cytoskeleton. Recruits other +TIP proteins to microtubules by binding to a conserved Ser-X-Leu-Pro (SXLP) motif in their polypeptide chains. Promotes cytoplasmic microtubule nucleation and elongation. Involved in mitotic spindle positioning by stabilizing microtubules and promoting dynamic connection between astral microtubules and the cortex during mitotic chromosome segregation. Assists chromosome alignment in metaphase by recruiting the SKA complex to the spindle and stabilizing its interactions with microtubule bundles (K-fibers). Also acts as a regulator of minus-end microtubule organization: interacts with the complex formed by AKAP9 and PDE4DIP, leading to recruit CAMSAP2 to the Golgi apparatus, thereby tethering non-centrosomal minus-end microtubules to the Golgi, an important step for polarized cell movement. Promotes elongation of CAMSAP2-decorated microtubule stretches on the minus-end of microtubules. Acts as a regulator of autophagosome transport via interaction with CAMSAP2. Functions downstream of Rho GTPases and DIAPH1 in stable microtubule formation. May play a role in cell migration. The polypeptide is Microtubule-associated protein RP/EB family member 1 (Mapre1) (Rattus norvegicus (Rat)).